The chain runs to 98 residues: Cytochrome b (98 aa).

3 helical membrane passes run 1 to 18, 42 to 63, and 78 to 98; these read LLGL…FLAM, WLIR…YLHV, and WNIG…GYVL. H48 and H62 together coordinate heme b.

This sequence belongs to the cytochrome b family. In terms of assembly, the cytochrome bc1 complex contains 3 respiratory subunits (MT-CYB, CYC1 and UQCRFS1), 2 core proteins (UQCRC1 and UQCRC2) and probably 6 low-molecular weight proteins. Requires heme b as cofactor.

The protein localises to the mitochondrion inner membrane. In terms of biological role, component of the ubiquinol-cytochrome c reductase complex (complex III or cytochrome b-c1 complex) that is part of the mitochondrial respiratory chain. The b-c1 complex mediates electron transfer from ubiquinol to cytochrome c. Contributes to the generation of a proton gradient across the mitochondrial membrane that is then used for ATP synthesis. In Scaphirhynchus platorynchus (Shovelnose sturgeon), this protein is Cytochrome b (mt-cyb).